The primary structure comprises 659 residues: 4-alpha-glucanotransferase (659 aa).

The active-site Nucleophile is E123. D214 serves as the catalytic Proton donor.

Belongs to the glycosyl hydrolase 57 family. In terms of assembly, homodimer.

It catalyses the reaction Transfers a segment of a (1-&gt;4)-alpha-D-glucan to a new position in an acceptor, which may be glucose or a (1-&gt;4)-alpha-D-glucan.. Its activity is regulated as follows. Inhibited by p-chloromercuribenzoic acid, monoiodoacetic acid, mercury and nickel ions. Its function is as follows. Catalyzes the transglycosylation of maltooligosaccharides, yielding maltooligosaccharides of various lengths and glucose. Maltose and glucose can be used as acceptors in the transfer reaction. The polypeptide is 4-alpha-glucanotransferase (jgt) (Thermococcus litoralis (strain ATCC 51850 / DSM 5473 / JCM 8560 / NS-C)).